The following is a 223-amino-acid chain: Ribonuclease 3 (223 aa).

The RNase III domain maps to 3-125 (LERLQKKLSY…IIAAIYLDAG (123 aa)). Residue E38 participates in Mg(2+) binding. D42 is a catalytic residue. Mg(2+)-binding residues include D111 and E114. E114 is a catalytic residue. The region spanning 152-222 (DPKTRLQEFL…AEQVLAKLTT (71 aa)) is the DRBM domain.

Belongs to the ribonuclease III family. In terms of assembly, homodimer. Mg(2+) is required as a cofactor.

It is found in the cytoplasm. It catalyses the reaction Endonucleolytic cleavage to 5'-phosphomonoester.. Digests double-stranded RNA. Involved in the processing of primary rRNA transcript to yield the immediate precursors to the large and small rRNAs (23S and 16S). Processes some mRNAs, and tRNAs when they are encoded in the rRNA operon. Processes pre-crRNA and tracrRNA of type II CRISPR loci if present in the organism. This Actinobacillus pleuropneumoniae serotype 5b (strain L20) protein is Ribonuclease 3.